The chain runs to 917 residues: Translation initiation factor IF-2 (917 aa).

Disordered regions lie at residues 1–84 (MSDG…GRAG) and 150–318 (KESE…DRER). Polar residues predominate over residues 10 to 27 (DGNNTPSQGGEQTRSSRL). 3 stretches are compositionally biased toward low complexity: residues 69–84 (AAGP…GRAG), 154–177 (QQAA…AAEA), and 227–236 (SRPAAAAPAR). The segment covering 265–274 (GAPPAPPRRP) has biased composition (pro residues). Residues 282–305 (GGSDRRSGRIDVRAAIEGDDDKTR) are compositionally biased toward basic and acidic residues. The tr-type G domain occupies 416–586 (PRAPVVTVMG…LLQSEMLDLK (171 aa)). The G1 stretch occupies residues 425–432 (GHVDHGKT). Residue 425–432 (GHVDHGKT) coordinates GTP. The tract at residues 450–454 (GITQH) is G2. Residues 472 to 475 (DTPG) form a G3 region. GTP contacts are provided by residues 472 to 476 (DTPGH) and 526 to 529 (NKID). The interval 526–529 (NKID) is G4. Residues 562-564 (SAL) are G5.

This sequence belongs to the TRAFAC class translation factor GTPase superfamily. Classic translation factor GTPase family. IF-2 subfamily.

It localises to the cytoplasm. Its function is as follows. One of the essential components for the initiation of protein synthesis. Protects formylmethionyl-tRNA from spontaneous hydrolysis and promotes its binding to the 30S ribosomal subunits. Also involved in the hydrolysis of GTP during the formation of the 70S ribosomal complex. This Gluconobacter oxydans (strain 621H) (Gluconobacter suboxydans) protein is Translation initiation factor IF-2.